The chain runs to 430 residues: tRNA(Ile)-lysidine synthase (430 aa).

24–29 (SGGLDS) is an ATP binding site.

The protein belongs to the tRNA(Ile)-lysidine synthase family.

The protein localises to the cytoplasm. The catalysed reaction is cytidine(34) in tRNA(Ile2) + L-lysine + ATP = lysidine(34) in tRNA(Ile2) + AMP + diphosphate + H(+). In terms of biological role, ligates lysine onto the cytidine present at position 34 of the AUA codon-specific tRNA(Ile) that contains the anticodon CAU, in an ATP-dependent manner. Cytidine is converted to lysidine, thus changing the amino acid specificity of the tRNA from methionine to isoleucine. This Haemophilus influenzae (strain PittGG) protein is tRNA(Ile)-lysidine synthase.